Consider the following 80-residue polypeptide: MSFEVLEQLESKIQTAVDTITLLQMEVEELKEDKVKLEAEANELRSQREDLEQKAQQAQQEHAQWQERIRALLGKMDEVE.

Positions 3–80 form a coiled coil; it reads FEVLEQLESK…ALLGKMDEVE (78 aa).

It belongs to the ZapB family. As to quaternary structure, homodimer. The ends of the coiled-coil dimer bind to each other, forming polymers. Interacts with FtsZ.

It localises to the cytoplasm. In terms of biological role, non-essential, abundant cell division factor that is required for proper Z-ring formation. It is recruited early to the divisome by direct interaction with FtsZ, stimulating Z-ring assembly and thereby promoting cell division earlier in the cell cycle. Its recruitment to the Z-ring requires functional FtsA or ZipA. This is Cell division protein ZapB from Vibrio parahaemolyticus serotype O3:K6 (strain RIMD 2210633).